Consider the following 491-residue polypeptide: Cytosolic Fe-S cluster assembly factor NAR1 (491 aa).

8 residues coordinate [4Fe-4S] cluster: Cys-20, Cys-59, Cys-62, Cys-65, Cys-177, Cys-231, Cys-412, and Cys-416.

Belongs to the NARF family. In terms of assembly, interacts with CIA1.

In terms of biological role, component of the cytosolic Fe/S protein assembly machinery. Required for maturation of extramitochondrial Fe/S proteins. May play a role in the transfer of pre-assembled Fe/S clusters to target apoproteins. The polypeptide is Cytosolic Fe-S cluster assembly factor NAR1 (NAR1) (Saccharomyces cerevisiae (strain YJM789) (Baker's yeast)).